Consider the following 1024-residue polypeptide: Beta-galactosidase (1024 aa).

2 residues coordinate substrate: Asn103 and Asp202. Residue Asp202 coordinates Na(+). Residues Glu417, His419, and Glu462 each contribute to the Mg(2+) site. Residues Glu462 and 538–541 (EYAH) each bind substrate. The active-site Proton donor is the Glu462. The active-site Nucleophile is Glu538. Asn598 contributes to the Mg(2+) binding site. Na(+) is bound by residues Phe602 and Asn605. Substrate contacts are provided by Asn605 and Trp1000.

This sequence belongs to the glycosyl hydrolase 2 family. As to quaternary structure, homotetramer. Requires Mg(2+) as cofactor. Na(+) serves as cofactor.

The catalysed reaction is Hydrolysis of terminal non-reducing beta-D-galactose residues in beta-D-galactosides.. This chain is Beta-galactosidase, found in Escherichia coli O139:H28 (strain E24377A / ETEC).